The primary structure comprises 95 residues: Protein TusB (95 aa).

It belongs to the DsrH/TusB family. Heterohexamer, formed by a dimer of trimers. The hexameric TusBCD complex contains 2 copies each of TusB, TusC and TusD. The TusBCD complex interacts with TusE.

Its subcellular location is the cytoplasm. Functionally, part of a sulfur-relay system required for 2-thiolation of 5-methylaminomethyl-2-thiouridine (mnm(5)s(2)U) at tRNA wobble positions. The protein is Protein TusB of Escherichia coli (strain ATCC 8739 / DSM 1576 / NBRC 3972 / NCIMB 8545 / WDCM 00012 / Crooks).